We begin with the raw amino-acid sequence, 1886 residues long: Polyprotein P3 (1886 aa).

3 disordered regions span residues 1–24, 420–466, and 478–529; these read MATR…SGVP, RCDS…MQDD, and RMKK…NQPE. Residues 9 to 20 show a composition bias toward polar residues; it reads VTQTDGSRTATE. Positions 488–498 are enriched in low complexity; the sequence is QQALSSQAQEE. The CCHC-type zinc finger occupies 879-896; it reads CKCYICGQEGHYANQCRN. One can recognise a Peptidase A2 domain in the interval 1215–1292; it reads INAIVDTGAT…GLSPGIQMII (78 aa). Aspartate 1220 acts as the For protease activity in catalysis. One can recognise a Reverse transcriptase domain in the interval 1425 to 1615; sequence LLQMKVIRPS…PEIDFLGASL (191 aa). An RNase H type-1 domain is found at 1706–1841; sequence KDSFIIIETD…ADALSRMINF (136 aa). The Mg(2+) site is built by aspartate 1715, glutamate 1758, aspartate 1784, and aspartate 1833.

Polyprotein P3 is presumably proteolytically cleaved into several chains by viral protease.

The enzyme catalyses Endonucleolytic cleavage to 5'-phosphomonoester.. It carries out the reaction DNA(n) + a 2'-deoxyribonucleoside 5'-triphosphate = DNA(n+1) + diphosphate. In terms of biological role, capsid protein self assembles to form a bacilliform capsid about 90-900 nm in length. The capsid encapsulates the genomic dsDNA. Following virus entry into host cell, provides nuclear import of the viral genome. Virus particles do not enter the nucleus, but are targeted to the nuclear membrane through the interaction with host importins. The sequence is that of Polyprotein P3 from Commelina yellow mottle virus (CoYMV).